Consider the following 502-residue polypeptide: 4,4'-diapophytoene desaturase (4,4'-diaponeurosporene-forming) (502 aa).

5–17 (VIGAGVTGLAAAA) lines the FAD pocket.

This sequence belongs to the carotenoid/retinoid oxidoreductase family. CrtN subfamily.

The enzyme catalyses 15-cis-4,4'-diapophytoene + 3 FAD + 3 H(+) = all-trans-4,4'-diaponeurosporene + 3 FADH2. Its pathway is carotenoid biosynthesis; staphyloxanthin biosynthesis; staphyloxanthin from farnesyl diphosphate: step 2/5. Its function is as follows. Involved in the biosynthesis of the yellow-orange carotenoid staphyloxanthin, which plays a role in the virulence via its protective function against oxidative stress. Catalyzes three successive dehydrogenation reactions that lead to the introduction of three double bonds into 4,4'-diapophytoene (dehydrosqualene), with 4,4'-diapophytofluene and 4,4'-diapo-zeta-carotene as intermediates, and 4,4'-diaponeurosporene (the major deep-yellow pigment in staphylococci strains) as the end product. The chain is 4,4'-diapophytoene desaturase (4,4'-diaponeurosporene-forming) from Staphylococcus aureus (strain COL).